A 380-amino-acid chain; its full sequence is Lipid-A-disaccharide synthase (380 aa).

This sequence belongs to the LpxB family.

The enzyme catalyses a lipid X + a UDP-2-N,3-O-bis[(3R)-3-hydroxyacyl]-alpha-D-glucosamine = a lipid A disaccharide + UDP + H(+). It functions in the pathway bacterial outer membrane biogenesis; LPS lipid A biosynthesis. In terms of biological role, condensation of UDP-2,3-diacylglucosamine and 2,3-diacylglucosamine-1-phosphate to form lipid A disaccharide, a precursor of lipid A, a phosphorylated glycolipid that anchors the lipopolysaccharide to the outer membrane of the cell. The sequence is that of Lipid-A-disaccharide synthase from Francisella tularensis subsp. novicida (strain U112).